Here is a 206-residue protein sequence, read N- to C-terminus: Glycerol-3-phosphate acyltransferase (206 aa).

Helical transmembrane passes span 3 to 23, 51 to 71, 83 to 103, 113 to 133, and 162 to 182; these read LGWL…SYII, VGPA…AVVV, FAAA…YYGF, IGVL…IAIG, and WFGY…LSMW.

Belongs to the PlsY family. As to quaternary structure, probably interacts with PlsX.

It localises to the cell membrane. The catalysed reaction is an acyl phosphate + sn-glycerol 3-phosphate = a 1-acyl-sn-glycero-3-phosphate + phosphate. It participates in lipid metabolism; phospholipid metabolism. Functionally, catalyzes the transfer of an acyl group from acyl-phosphate (acyl-PO(4)) to glycerol-3-phosphate (G3P) to form lysophosphatidic acid (LPA). This enzyme utilizes acyl-phosphate as fatty acyl donor, but not acyl-CoA or acyl-ACP. The polypeptide is Glycerol-3-phosphate acyltransferase (Halalkalibacterium halodurans (strain ATCC BAA-125 / DSM 18197 / FERM 7344 / JCM 9153 / C-125) (Bacillus halodurans)).